Reading from the N-terminus, the 223-residue chain is V-type ATP synthase subunit D (223 aa).

A disordered region spans residues 203–223 (AREAEEEGGRPNPQVEIGAGL).

This sequence belongs to the V-ATPase D subunit family.

Produces ATP from ADP in the presence of a proton gradient across the membrane. The protein is V-type ATP synthase subunit D of Thermus thermophilus (strain ATCC BAA-163 / DSM 7039 / HB27).